A 510-amino-acid chain; its full sequence is Aspartate kinase FUB3 (510 aa).

ACT domains lie at 372-440 and 446-510; these read ILSN…VLPD and LVGA…KNAI.

The protein belongs to the aspartokinase family.

It catalyses the reaction L-aspartate + ATP = 4-phospho-L-aspartate + ADP. It functions in the pathway mycotoxin biosynthesis. Aspartate kinase; part of the gene cluster that mediates the biosynthesis of fusaric acid, a mycotoxin with low to moderate toxicity to animals and humans, but with high phytotoxic properties. L-aspartate is suggested as fusaric acid amino acid precursor that is activated and further processed to O-acetyl-L-homoserine by cluster enzymes aspartate kinase FUB3 and homoserine O-acetyltransferase FUB5, as well as enzymes of the primary metabolism. The polyketide synthase (PKS) FUB1 generates the triketide trans-2-hexenal which is presumptively released by the hydrolase FUB4 and linked to the NRPS-bound amino acid precursor by NAD(P)-dependent dehydrogenase FUB6. FUB1, FUB4, and the non-canonical NRPS Fub8 may form an enzyme complex. Further processing of the NRPS-bound intermediate might be carried out by FUB6 and the sulfhydrylase FUB7, enabling a spontaneous electrocyclization to close the carbon backbone of fusaric acid. Dihydrofusaric acid is likely to be released via reduction by the thioester reductase (TR) domain of FUB8 whereupon the final oxidation to fusaric acid may (also) be performed by the FMN-dependent dehydrogenase FUB9. This chain is Aspartate kinase FUB3, found in Gibberella fujikuroi (strain CBS 195.34 / IMI 58289 / NRRL A-6831) (Bakanae and foot rot disease fungus).